A 186-amino-acid polypeptide reads, in one-letter code: Large ribosomal subunit protein uL5 (186 aa).

Belongs to the universal ribosomal protein uL5 family. In terms of assembly, part of the 50S ribosomal subunit; part of the 5S rRNA/L5/L18/L25 subcomplex. Contacts the 5S rRNA and the P site tRNA. Forms a bridge to the 30S subunit in the 70S ribosome.

In terms of biological role, this is one of the proteins that bind and probably mediate the attachment of the 5S RNA into the large ribosomal subunit, where it forms part of the central protuberance. In the 70S ribosome it contacts protein S13 of the 30S subunit (bridge B1b), connecting the 2 subunits; this bridge is implicated in subunit movement. Contacts the P site tRNA; the 5S rRNA and some of its associated proteins might help stabilize positioning of ribosome-bound tRNAs. In Mycoplasmopsis synoviae (strain 53) (Mycoplasma synoviae), this protein is Large ribosomal subunit protein uL5.